Consider the following 274-residue polypeptide: Putative pyruvate, phosphate dikinase regulatory protein (274 aa).

Glycine 153–threonine 160 contributes to the ADP binding site.

It belongs to the pyruvate, phosphate/water dikinase regulatory protein family. PDRP subfamily.

The enzyme catalyses N(tele)-phospho-L-histidyl/L-threonyl-[pyruvate, phosphate dikinase] + ADP = N(tele)-phospho-L-histidyl/O-phospho-L-threonyl-[pyruvate, phosphate dikinase] + AMP + H(+). It carries out the reaction N(tele)-phospho-L-histidyl/O-phospho-L-threonyl-[pyruvate, phosphate dikinase] + phosphate + H(+) = N(tele)-phospho-L-histidyl/L-threonyl-[pyruvate, phosphate dikinase] + diphosphate. Its function is as follows. Bifunctional serine/threonine kinase and phosphorylase involved in the regulation of the pyruvate, phosphate dikinase (PPDK) by catalyzing its phosphorylation/dephosphorylation. In Bartonella henselae (strain ATCC 49882 / DSM 28221 / CCUG 30454 / Houston 1) (Rochalimaea henselae), this protein is Putative pyruvate, phosphate dikinase regulatory protein.